A 213-amino-acid polypeptide reads, in one-letter code: Na(+)-translocating NADH-quinone reductase subunit D (213 aa).

7 helical membrane passes run 21 to 41 (PLIAILGICSALAVTTTVNTA), 42 to 62 (LTMGLAVSFVTGCSSFFVSLL), 77 to 97 (IIISLFVIVIDQFLKAFFFDI), 101 to 121 (LSVFVGLIITNCIVMGRAESL), 131 to 151 (FLDGFASGLGYGWVLVTVSII), 153 to 173 (EFFGFGTILGLQLIPKCFYAS), and 183 to 203 (FGLMVLAPSAFFLLGIMIWGV).

Belongs to the NqrDE/RnfAE family. Composed of six subunits; NqrA, NqrB, NqrC, NqrD, NqrE and NqrF.

It localises to the cell inner membrane. It carries out the reaction a ubiquinone + n Na(+)(in) + NADH + H(+) = a ubiquinol + n Na(+)(out) + NAD(+). Functionally, NQR complex catalyzes the reduction of ubiquinone-1 to ubiquinol by two successive reactions, coupled with the transport of Na(+) ions from the cytoplasm to the periplasm. NqrA to NqrE are probably involved in the second step, the conversion of ubisemiquinone to ubiquinol. The chain is Na(+)-translocating NADH-quinone reductase subunit D from Chlamydia abortus (strain DSM 27085 / S26/3) (Chlamydophila abortus).